The chain runs to 444 residues: Probable D-serine dehydratase (444 aa).

N6-(pyridoxal phosphate)lysine is present on Lys-118.

Belongs to the serine/threonine dehydratase family. DsdA subfamily. The cofactor is pyridoxal 5'-phosphate.

It carries out the reaction D-serine = pyruvate + NH4(+). This is Probable D-serine dehydratase from Desulfitobacterium hafniense (strain Y51).